We begin with the raw amino-acid sequence, 391 residues long: Nucleosome assembly protein 1-like 1 (391 aa).

Methionine 1 bears the N-acetylmethionine mark. Residues 1 to 10 (MADIDNKEQS) are compositionally biased toward basic and acidic residues. The disordered stretch occupies residues 1-32 (MADIDNKEQSELDQDLDDVEEVEEEETGEETK). Alanine 2 carries the post-translational modification N-acetylalanine. Serine 10 carries the post-translational modification Phosphoserine. The segment covering 11-28 (ELDQDLDDVEEVEEEETG) has biased composition (acidic residues). Residues threonine 62 and threonine 64 each carry the phosphothreonine modification. At serine 69 the chain carries Phosphoserine. Lysine 116 bears the N6-acetyllysine mark. The NAP1L motif motif lies at 125–150 (YEPTEEECEWKPDEEDEISEELKEKA). Acidic residues predominate over residues 132–143 (CEWKPDEEDEIS). The tract at residues 132 to 163 (CEWKPDEEDEISEELKEKAKIEDEKKDEEKED) is disordered. Serine 143 carries the phosphoserine modification. Residues 144-163 (EELKEKAKIEDEKKDEEKED) show a composition bias toward basic and acidic residues. Residues 273-279 (IKKKQKH) carry the Nuclear localization signal motif. Residues 346–376 (AIEDDDDDYDEEGEEADEEGEEEGDEENDPD) are compositionally biased toward acidic residues. A disordered region spans residues 346–391 (AIEDDDDDYDEEGEEADEEGEEEGDEENDPDYDPKKDQNPAECKQQ). The span at 377–391 (YDPKKDQNPAECKQQ) shows a compositional bias: basic and acidic residues. Cysteine 388 carries the post-translational modification Cysteine methyl ester. The S-farnesyl cysteine moiety is linked to residue cysteine 388. Positions 389 to 391 (KQQ) are cleaved as a propeptide — removed in mature form.

Belongs to the nucleosome assembly protein (NAP) family. In terms of assembly, homodimer. The dimer binds strongly and sequentially to single and double H2A-H2B heterodimers. Interacts with ERCC6; this interaction increases ERCC6 processivity. Interacts with RAD54. Interacts with SETD1A. As to quaternary structure, (Microbial infection) Interacts with human herpesvirus 8 protein LANA1 (via N-terminus); this interaction is required for LANA1-dependent DNA replication. (Microbial infection) Interacts with hepatitis virus protein NS5A (via C-terminus); this interaction sequesters NAP1L1 in the cytoplasm, blocking its nuclear translocation. In terms of assembly, (Microbial infection) Interacts with Chikungunya virus non-structural protein 3 (via C-terminus). Monoglycylated on glutamate residues. Cannot be polyglycylated due to the absence of functional TTLL10 in human. Post-translationally, polyglutamylated by TTLL4 on glutamate residues, resulting in polyglutamate chains on the gamma-carboxyl group. Both polyglutamylation and monoglycylation modifications can coexist on the same protein on adjacent residues, and lowering polyglycylation levels increases polyglutamylation, and reciprocally. In terms of tissue distribution, ubiquitously expressed.

The protein resides in the nucleus. It is found in the melanosome. The protein localises to the cytoplasm. Functionally, histone chaperone that plays a role in the nuclear import of H2A-H2B and nucleosome assembly. Also participates in several important DNA repair mechanisms: greatly enhances ERCC6-mediated chromatin remodeling which is essential for transcription-coupled nucleotide excision DNA repair. Also stimulates homologous recombination (HR) by RAD51 and RAD54 which is essential in mitotic DNA double strand break (DSB) repair. Plays a key role in the regulation of embryonic neurogenesis. Promotes the proliferation of neural progenitors and inhibits neuronal differentiation during cortical development. Regulates neurogenesis via the modulation of RASSF10; regulates RASSF10 expression by promoting SETD1A-mediated H3K4 methylation at the RASSF10 promoter. Its function is as follows. (Microbial infection) Positively regulates Epstein-Barr virus reactivation in epithelial cells through the induction of viral BZLF1 expression. In terms of biological role, (Microbial infection) Together with human herpesvirus 8 protein LANA1, assists the proper assembly of the nucleosome on the replicated viral DNA. The polypeptide is Nucleosome assembly protein 1-like 1 (NAP1L1) (Homo sapiens (Human)).